A 277-amino-acid chain; its full sequence is uncharacterized protein (277 aa).

This is an uncharacterized protein from Methanocaldococcus jannaschii (strain ATCC 43067 / DSM 2661 / JAL-1 / JCM 10045 / NBRC 100440) (Methanococcus jannaschii).